The following is a 290-amino-acid chain: Glutaredoxin domain-containing cysteine-rich protein 1 (290 aa).

The Glutaredoxin domain maps to 127 to 234 (LQQPSADLEF…DLLTKIERVQ (108 aa)).

Belongs to the GRXCR1 family. In terms of tissue distribution, in the inner ear, expressed predominantly in sensory hair cells and their stereocilia bundles with higher levels in outer hair cells (OHC) at P1 and in inner hair cells (IHC) at P5. At P1, expression is prominent in each row of stereocilia within bundles including immature shorter stereocilia. Expression is also observed in apical microvilli of sensory cells at P1 and in kinocilia at P1 and P5. In the adult, expression is localized throughout the length of the stereocilia of both OHC and IHC (at protein level).

Its subcellular location is the cell projection. The protein localises to the stereocilium. It localises to the microvillus. It is found in the kinocilium. Functionally, may play a role in actin filament architecture in developing stereocilia of sensory cells. The polypeptide is Glutaredoxin domain-containing cysteine-rich protein 1 (Grxcr1) (Mus musculus (Mouse)).